Here is a 253-residue protein sequence, read N- to C-terminus: Bacitracin export ATP-binding protein BceA (253 aa).

The ABC transporter domain occupies leucine 4–glutamine 243. Position 40-47 (glycine 40–threonine 47) interacts with ATP.

It belongs to the ABC transporter superfamily. As to quaternary structure, the complex is composed of two ATP-binding proteins (BceA) and two transmembrane proteins (BceB).

In terms of biological role, part of the ABC transporter complex BceAB (TC 3.A.1.123.5) involved in bacitracin export. Responsible for energy coupling to the transport system. This is Bacitracin export ATP-binding protein BceA (bceA) from Halalkalibacterium halodurans (strain ATCC BAA-125 / DSM 18197 / FERM 7344 / JCM 9153 / C-125) (Bacillus halodurans).